The sequence spans 426 residues: Adenylosuccinate synthetase (426 aa).

GTP-binding positions include 12–18 (GDEGKGK) and 40–42 (GHT). Asp-13 functions as the Proton acceptor in the catalytic mechanism. Mg(2+) is bound by residues Asp-13 and Gly-40. Residues 13 to 16 (DEGK), 38 to 41 (NAGH), Thr-131, Arg-145, Gln-226, Thr-241, and Arg-305 each bind IMP. His-41 (proton donor) is an active-site residue. Position 301–307 (301–307 (ATTGRKR)) interacts with substrate. GTP contacts are provided by residues Arg-307, 333–335 (KLD), and 415–417 (SVG).

It belongs to the adenylosuccinate synthetase family. In terms of assembly, homodimer. Requires Mg(2+) as cofactor.

The protein resides in the cytoplasm. The catalysed reaction is IMP + L-aspartate + GTP = N(6)-(1,2-dicarboxyethyl)-AMP + GDP + phosphate + 2 H(+). Its pathway is purine metabolism; AMP biosynthesis via de novo pathway; AMP from IMP: step 1/2. In terms of biological role, plays an important role in the de novo pathway of purine nucleotide biosynthesis. Catalyzes the first committed step in the biosynthesis of AMP from IMP. The polypeptide is Adenylosuccinate synthetase (Nitratidesulfovibrio vulgaris (strain DP4) (Desulfovibrio vulgaris)).